The primary structure comprises 627 residues: MAKTEQRFDYVKIGLASPERIIEWGQRTLPNGQVVGEVTKPETINYRTLKPEMDGLFCERIFGPVKDWECHCGKYKRVRHRGIVCERCGVEVTESRVRRHRMGYIKLAAPVTHVWYLKGIPSHIATLLDMPLRDVEQVVYFNAYVVVDPGNAPNLSYKQLLTEDQYLEIEDQMYEEGSELQLPENWAMIGAEAIERLLKDIDLEKEAEQLREEIASARGQKRARLIKRLRVIDNFIATGARPEWMVLRVLPVIPPDLRPMVQLDGGRFATSDLNDLYRRVINRNNRLARLQEIMAPEIIVRNEKRMLQEAVDALIDNGRRGRMVVGANNRPLKSLSDIIEGKQGRFRQNLLGKRVDYSGRSVIVVGPNLRMHQCGLPKEMAIELFQPFVIHKLIKRGIVNNIKAAKKLIQSNDPQVWDVLEDVIDGHPVLLNRAPTLHRLGIQAFEPILVEGRAIQLHPLVCPAFNADFDGDQMAVHVPLSLEAQAEARLLMLATNNILSPATGAPIITPSQDMVLGCYYLTADNPHAPDLGDRYFASLEDALIAYDRGVIGLHSKIWVRYSGPMELGKEEKESEPQIIEEPGGTRLKITNYRRIREDRDGNVISQYIRTTAGRIIFNKTVQDILSA.

Positions 70, 72, 85, and 88 each coordinate Zn(2+). Residues Asp-468, Asp-470, and Asp-472 each coordinate Mg(2+).

It belongs to the RNA polymerase beta' chain family. RpoC1 subfamily. As to quaternary structure, in cyanobacteria the RNAP catalytic core is composed of 2 alpha, 1 beta, 1 beta', 1 gamma and 1 omega subunit. When a sigma factor is associated with the core the holoenzyme is formed, which can initiate transcription. It depends on Mg(2+) as a cofactor. Zn(2+) is required as a cofactor.

It catalyses the reaction RNA(n) + a ribonucleoside 5'-triphosphate = RNA(n+1) + diphosphate. Its function is as follows. DNA-dependent RNA polymerase catalyzes the transcription of DNA into RNA using the four ribonucleoside triphosphates as substrates. In Synechococcus sp. (strain JA-3-3Ab) (Cyanobacteria bacterium Yellowstone A-Prime), this protein is DNA-directed RNA polymerase subunit gamma.